We begin with the raw amino-acid sequence, 150 residues long: Nucleoside diphosphate kinase (150 aa).

6 residues coordinate ATP: Lys9, Phe57, Arg85, Thr91, Arg102, and Asn112. The active-site Pros-phosphohistidine intermediate is His115.

Belongs to the NDK family. Homotetramer. Requires Mg(2+) as cofactor.

Its subcellular location is the cytoplasm. It catalyses the reaction a 2'-deoxyribonucleoside 5'-diphosphate + ATP = a 2'-deoxyribonucleoside 5'-triphosphate + ADP. The catalysed reaction is a ribonucleoside 5'-diphosphate + ATP = a ribonucleoside 5'-triphosphate + ADP. Its function is as follows. Major role in the synthesis of nucleoside triphosphates other than ATP. The ATP gamma phosphate is transferred to the NDP beta phosphate via a ping-pong mechanism, using a phosphorylated active-site intermediate. The protein is Nucleoside diphosphate kinase of Symbiobacterium thermophilum (strain DSM 24528 / JCM 14929 / IAM 14863 / T).